Here is a 353-residue protein sequence, read N- to C-terminus: Histidine biosynthesis bifunctional protein HisB (353 aa).

A histidinol-phosphatase region spans residues 1-164; the sequence is MKNKILFIDR…HITKYIIKHN (164 aa). Aspartate 9 functions as the Nucleophile in the catalytic mechanism. Positions 9 and 11 each coordinate Mg(2+). Aspartate 11 serves as the catalytic Proton donor. Zn(2+) contacts are provided by cysteine 93, histidine 95, cysteine 101, and cysteine 103. Aspartate 128 provides a ligand contact to Mg(2+). The interval 165–353 is imidazoleglycerol-phosphate dehydratase; it reads RYAEIIRRTK…NMLPTSKGIL (189 aa).

This sequence in the N-terminal section; belongs to the histidinol-phosphatase family. It in the C-terminal section; belongs to the imidazoleglycerol-phosphate dehydratase family. Mg(2+) is required as a cofactor. Requires Zn(2+) as cofactor.

Its subcellular location is the cytoplasm. The enzyme catalyses D-erythro-1-(imidazol-4-yl)glycerol 3-phosphate = 3-(imidazol-4-yl)-2-oxopropyl phosphate + H2O. The catalysed reaction is L-histidinol phosphate + H2O = L-histidinol + phosphate. The protein operates within amino-acid biosynthesis; L-histidine biosynthesis; L-histidine from 5-phospho-alpha-D-ribose 1-diphosphate: step 6/9. It functions in the pathway amino-acid biosynthesis; L-histidine biosynthesis; L-histidine from 5-phospho-alpha-D-ribose 1-diphosphate: step 8/9. This chain is Histidine biosynthesis bifunctional protein HisB, found in Buchnera aphidicola subsp. Acyrthosiphon pisum (strain Tuc7).